The primary structure comprises 122 residues: MARILNVEIPNNKRVIISLTYVYGIGRSLSKQILAEANIDENIRVKDLSEEDLTKIRNIASRFTTEGDLRREIQLNIKRLMEIKSYRGIRHRKGLPVRGQVTQKNARTRKGPRKTVAGKKGK.

The segment at 94 to 122 is disordered; the sequence is GLPVRGQVTQKNARTRKGPRKTVAGKKGK. Residues 106 to 122 show a composition bias toward basic residues; it reads ARTRKGPRKTVAGKKGK.

Belongs to the universal ribosomal protein uS13 family. As to quaternary structure, part of the 30S ribosomal subunit. Forms a loose heterodimer with protein S19. Forms two bridges to the 50S subunit in the 70S ribosome.

Located at the top of the head of the 30S subunit, it contacts several helices of the 16S rRNA. In the 70S ribosome it contacts the 23S rRNA (bridge B1a) and protein L5 of the 50S subunit (bridge B1b), connecting the 2 subunits; these bridges are implicated in subunit movement. Contacts the tRNAs in the A and P-sites. The chain is Small ribosomal subunit protein uS13 from Mycoplasma mobile (strain ATCC 43663 / 163K / NCTC 11711) (Mesomycoplasma mobile).